Here is a 531-residue protein sequence, read N- to C-terminus: Tyrosine 2,3-aminomutase (531 aa).

The Proton donor/acceptor role is filled by tyrosine 51. Position 81 (histidine 81) interacts with substrate. The 5-imidazolinone (Ala-Gly) cross-link spans 140 to 142; that stretch reads ASG. A 2,3-didehydroalanine (Ser) modification is found at serine 141. Positions 193 and 298 each coordinate substrate.

The protein belongs to the TAL/TAM family. In terms of assembly, homotetramer; dimer of dimers. In terms of processing, contains an active site 4-methylidene-imidazol-5-one (MIO), which is formed autocatalytically by cyclization and dehydration of residues Ala-Ser-Gly.

It catalyses the reaction L-tyrosine = 3-amino-3-(4-hydroxyphenyl)propanoate. The enzyme catalyses L-tyrosine = (E)-4-coumarate + NH4(+). Its function is as follows. Has aminomutase and, to a lesser extent, ammonia-lyase activity. Primarily, catalyzes the rearrangement of L-tyrosine to R-beta-tyrosine, which is incorporated into secondary metabolites called chondramides. The aminomutase activity mainly produces R-beta-tyrosine but also S-beta tyrosine in smaller amounts. Does not accept D-tyrosine, L-histidine or L-phenylalanine as substrates. In Chondromyces crocatus, this protein is Tyrosine 2,3-aminomutase.